Here is a 147-residue protein sequence, read N- to C-terminus: UPF0306 protein YhbP (147 aa).

Belongs to the UPF0306 family.

In Salmonella choleraesuis (strain SC-B67), this protein is UPF0306 protein YhbP.